Here is a 51-residue protein sequence, read N- to C-terminus: Cytochrome b559 subunit beta (51 aa).

Residues 26 to 42 traverse the membrane as a helical segment; the sequence is WLAVHALTVPTIFFLGA. Residue histidine 30 coordinates heme.

Belongs to the PsbE/PsbF family. As to quaternary structure, heterodimer of an alpha subunit and a beta subunit. PSII is composed of 1 copy each of membrane proteins PsbA, PsbB, PsbC, PsbD, PsbE, PsbF, PsbH, PsbI, PsbJ, PsbK, PsbL, PsbM, PsbT, PsbX, Psb30/Ycf12, peripheral proteins PsbO, CyanoQ (PsbQ), PsbU, PsbV and a large number of cofactors. It forms dimeric complexes. Requires heme b as cofactor.

Its subcellular location is the cell inner membrane. Functionally, this b-type cytochrome is tightly associated with the reaction center of photosystem II (PSII). PSII is a light-driven water:plastoquinone oxidoreductase that uses light energy to abstract electrons from H(2)O, generating O(2) and a proton gradient subsequently used for ATP formation. It consists of a core antenna complex that captures photons, and an electron transfer chain that converts photonic excitation into a charge separation. This Gloeobacter violaceus (strain ATCC 29082 / PCC 7421) protein is Cytochrome b559 subunit beta.